A 692-amino-acid chain; its full sequence is Serine/threonine-protein kinase Nek8 (692 aa).

The Protein kinase domain occupies 4–258; that stretch reads YERIRVVGRG…LSHIMAQPLC (255 aa). ATP-binding positions include 10–18 and Lys33; that span reads VGRGAFGIV. The active-site Proton acceptor is Asp128. A Phosphothreonine; by autocatalysis modification is found at Thr162. The tract at residues 277–301 is disordered; the sequence is AEKSVAPSNTGSRTTSVRCRGIPRG. Polar residues predominate over residues 282-293; sequence APSNTGSRTTSV. RCC1 repeat units lie at residues 312–350, 410–461, 462–513, 580–631, and 632–684; these read SSVY…VTRS, GIIM…LSTE, RELF…LTVP, GDCY…IGAE, and SEVY…AVRS.

This sequence belongs to the protein kinase superfamily. NEK Ser/Thr protein kinase family. NIMA subfamily. As to quaternary structure, interacts with PKD2; may regulate PKD2 targeting to the cilium. Interacts with ANKS6. Component of a complex containing at least ANKS6, INVS, NEK8 and NPHP3. ANKS6 may organize complex assembly by linking INVS and NPHP3 to NEK8 and INVS may target the complex to the proximal ciliary axoneme. Interacts with ANKS3. Requires Mg(2+) as cofactor. Highest expression in thyroid, adrenal gland and skin. Low levels in spleen, colon and uterus. Overexpressed in breast tumors, with highest expression in infiltrating ductal carcinomas and moderate levels in mucinous adenocarcinoma.

The protein resides in the cytoplasm. It is found in the cytoskeleton. The protein localises to the cell projection. It localises to the cilium. Its subcellular location is the microtubule organizing center. The protein resides in the centrosome. It is found in the cilium axoneme. It carries out the reaction L-seryl-[protein] + ATP = O-phospho-L-seryl-[protein] + ADP + H(+). The catalysed reaction is L-threonyl-[protein] + ATP = O-phospho-L-threonyl-[protein] + ADP + H(+). Functionally, required for renal tubular integrity. May regulate local cytoskeletal structure in kidney tubule epithelial cells. May regulate ciliary biogenesis through targeting of proteins to the cilia. Plays a role in organogenesis, and is involved in the regulation of the Hippo signaling pathway. This is Serine/threonine-protein kinase Nek8 (NEK8) from Homo sapiens (Human).